The primary structure comprises 224 residues: Charged multivesicular body protein 4c (224 aa).

Disordered regions lie at residues 1 to 21 and 182 to 224; these read MSVF…PTPQ and SGPE…AWAM. Over residues 7 to 17 the composition is skewed to gly residues; sequence LFGGGGKGGKG. Positions 21 to 221 form a coiled coil; sequence QEAIQKLRET…DEDDMEELKA (201 aa).

It belongs to the SNF7 family. Probable core component of the endosomal sorting required for transport complex III (ESCRT-III). ESCRT-III components are thought to multimerize to form a flat lattice on the perimeter membrane of the endosome.

It localises to the cytoplasm. It is found in the cytosol. The protein resides in the late endosome membrane. Probable core component of the endosomal sorting required for transport complex III (ESCRT-III) which is involved in multivesicular bodies (MVBs) formation and sorting of endosomal cargo proteins into MVBs. MVBs contain intraluminal vesicles (ILVs) that are generated by invagination and scission from the limiting membrane of the endosome and mostly are delivered to lysosomes enabling degradation of membrane proteins, such as stimulated growth factor receptors, lysosomal enzymes and lipids. Key component of the cytokinesis checkpoint, a process required to delay abscission to prevent both premature resolution of intercellular chromosome bridges and accumulation of DNA damage. This chain is Charged multivesicular body protein 4c (chmp4c), found in Danio rerio (Zebrafish).